Here is a 253-residue protein sequence, read N- to C-terminus: Small ribosomal subunit protein uS2 (253 aa).

This sequence belongs to the universal ribosomal protein uS2 family.

The protein is Small ribosomal subunit protein uS2 of Cereibacter sphaeroides (strain ATCC 17023 / DSM 158 / JCM 6121 / CCUG 31486 / LMG 2827 / NBRC 12203 / NCIMB 8253 / ATH 2.4.1.) (Rhodobacter sphaeroides).